Here is a 448-residue protein sequence, read N- to C-terminus: Methylenetetrahydrofolate--tRNA-(uracil-5-)-methyltransferase TrmFO (448 aa).

An FAD-binding site is contributed by 13–18 (GAGLAG).

The protein belongs to the MnmG family. TrmFO subfamily. The cofactor is FAD.

Its subcellular location is the cytoplasm. It catalyses the reaction uridine(54) in tRNA + (6R)-5,10-methylene-5,6,7,8-tetrahydrofolate + NADH + H(+) = 5-methyluridine(54) in tRNA + (6S)-5,6,7,8-tetrahydrofolate + NAD(+). The catalysed reaction is uridine(54) in tRNA + (6R)-5,10-methylene-5,6,7,8-tetrahydrofolate + NADPH + H(+) = 5-methyluridine(54) in tRNA + (6S)-5,6,7,8-tetrahydrofolate + NADP(+). Catalyzes the folate-dependent formation of 5-methyl-uridine at position 54 (M-5-U54) in all tRNAs. The polypeptide is Methylenetetrahydrofolate--tRNA-(uracil-5-)-methyltransferase TrmFO (Streptococcus pyogenes serotype M3 (strain ATCC BAA-595 / MGAS315)).